Here is a 416-residue protein sequence, read N- to C-terminus: Glutamyl-tRNA reductase (416 aa).

Substrate contacts are provided by residues 49–52 (TCNR), serine 105, 110–112 (EPQ), and glutamine 116. Residue cysteine 50 is the Nucleophile of the active site. 185 to 190 (GAGETI) provides a ligand contact to NADP(+).

Belongs to the glutamyl-tRNA reductase family. As to quaternary structure, homodimer.

The enzyme catalyses (S)-4-amino-5-oxopentanoate + tRNA(Glu) + NADP(+) = L-glutamyl-tRNA(Glu) + NADPH + H(+). Its pathway is porphyrin-containing compound metabolism; protoporphyrin-IX biosynthesis; 5-aminolevulinate from L-glutamyl-tRNA(Glu): step 1/2. Functionally, catalyzes the NADPH-dependent reduction of glutamyl-tRNA(Glu) to glutamate 1-semialdehyde (GSA). This is Glutamyl-tRNA reductase from Shewanella oneidensis (strain ATCC 700550 / JCM 31522 / CIP 106686 / LMG 19005 / NCIMB 14063 / MR-1).